The sequence spans 375 residues: Succinyl-diaminopimelate desuccinylase (375 aa).

His66 serves as a coordination point for Zn(2+). Residue Asp68 is part of the active site. Asp99 is a Zn(2+) binding site. Glu133 functions as the Proton acceptor in the catalytic mechanism. Residues Glu134, Glu162, and His348 each coordinate Zn(2+).

It belongs to the peptidase M20A family. DapE subfamily. Homodimer. Requires Zn(2+) as cofactor. The cofactor is Co(2+).

It catalyses the reaction N-succinyl-(2S,6S)-2,6-diaminopimelate + H2O = (2S,6S)-2,6-diaminopimelate + succinate. The protein operates within amino-acid biosynthesis; L-lysine biosynthesis via DAP pathway; LL-2,6-diaminopimelate from (S)-tetrahydrodipicolinate (succinylase route): step 3/3. Its function is as follows. Catalyzes the hydrolysis of N-succinyl-L,L-diaminopimelic acid (SDAP), forming succinate and LL-2,6-diaminopimelate (DAP), an intermediate involved in the bacterial biosynthesis of lysine and meso-diaminopimelic acid, an essential component of bacterial cell walls. The sequence is that of Succinyl-diaminopimelate desuccinylase from Herminiimonas arsenicoxydans.